The chain runs to 644 residues: uncharacterized protein (644 aa).

The disordered stretch occupies residues 1 to 35 (MKANGLDNDPARTGMERTDIDSEHPEAQPLLNNNH). Over 1-90 (MKANGLDNDP…ILNILILINT (90 aa)) the chain is Cytoplasmic. Residues 14–26 (GMERTDIDSEHPE) are compositionally biased toward basic and acidic residues. Phosphoserine is present on residues serine 22, serine 56, and serine 63. The helical transmembrane segment at 91–111 (IWLVTTLISDFFFNINILFGF) threads the bilayer. The Vacuolar portion of the chain corresponds to 112-122 (SNRYASFNDLT). The chain crosses the membrane as a helical span at residues 123-143 (LIFISIIANSFNLWFNKLGLY). Residues 144–147 (SALD) are Cytoplasmic-facing. Residues 148–168 (YSLNVTLCVLTLFNLALTYLI) traverse the membrane as a helical segment. The Vacuolar portion of the chain corresponds to 169–174 (KYTRQR). Residues 175–195 (IGFVGTFTYLWTSFSFFIGAI) form a helical membrane-spanning segment. The Cytoplasmic segment spans residues 196-271 (LDWYLLFYNN…EWVSIGFRNT (76 aa)). A disordered region spans residues 225–251 (NENHTNSTENRDRSQYGSGSPTPTHRS). Positions 239–251 (QYGSGSPTPTHRS) are enriched in polar residues. At serine 244 the chain carries Phosphoserine. Residues 272–292 (IKFLILIFFALFTLNTLLTTL) form a helical membrane-spanning segment. Residues 293 to 644 (DTYRLTHKLP…IGELGKLTED (352 aa)) are Vacuolar-facing. The region spanning 348 to 619 (PIILFEHGGY…IVEGGHEIYK (272 aa)) is the AB hydrolase-1 domain. Positions 469-492 (GRGDGDDGDDGNGNDGDGRNHDKT) are disordered.

It is found in the vacuole membrane. This is an uncharacterized protein from Saccharomyces cerevisiae (strain ATCC 204508 / S288c) (Baker's yeast).